We begin with the raw amino-acid sequence, 420 residues long: Na(+)/H(+) antiporter NhaA (420 aa).

The next 10 helical transmembrane spans lie at 34–54 (TTGG…ANLG), 69–89 (LTIE…IAGL), 107–127 (LVPI…YTLF), 141–161 (IPMA…GAGL), 168–190 (FLLT…FFST), 194–213 (IWWL…MQHF), 271–291 (WSAG…HVSG), 301–321 (PISL…ITLG), 342–362 (IIAV…MTDL), and 374–394 (AKAS…AMLH).

This sequence belongs to the NhaA Na(+)/H(+) (TC 2.A.33) antiporter family.

Its subcellular location is the cell membrane. It carries out the reaction Na(+)(in) + 2 H(+)(out) = Na(+)(out) + 2 H(+)(in). Functionally, na(+)/H(+) antiporter that extrudes sodium in exchange for external protons. In Cutibacterium acnes (strain DSM 16379 / KPA171202) (Propionibacterium acnes), this protein is Na(+)/H(+) antiporter NhaA.